A 352-amino-acid chain; its full sequence is Holliday junction branch migration complex subunit RuvB (352 aa).

Positions 4–185 are large ATPase domain (RuvB-L); that stretch reads PDRLISAVSG…FGIVQRLEFY (182 aa). Residues Ile-24, Arg-25, Gly-66, Lys-69, Thr-70, Thr-71, 132–134, Arg-175, Tyr-185, and Arg-222 contribute to the ATP site; that span reads EDF. Thr-70 lines the Mg(2+) pocket. The interval 186–256 is small ATPAse domain (RuvB-S); sequence NVEDLATIVS…IADKALNLLD (71 aa). A head domain (RuvB-H) region spans residues 259 to 352; sequence ERGFDHLDRR…SDLFTSEDGN (94 aa). Arg-295, Arg-314, and Arg-319 together coordinate DNA.

The protein belongs to the RuvB family. In terms of assembly, homohexamer. Forms an RuvA(8)-RuvB(12)-Holliday junction (HJ) complex. HJ DNA is sandwiched between 2 RuvA tetramers; dsDNA enters through RuvA and exits via RuvB. An RuvB hexamer assembles on each DNA strand where it exits the tetramer. Each RuvB hexamer is contacted by two RuvA subunits (via domain III) on 2 adjacent RuvB subunits; this complex drives branch migration. In the full resolvosome a probable DNA-RuvA(4)-RuvB(12)-RuvC(2) complex forms which resolves the HJ.

It localises to the cytoplasm. The enzyme catalyses ATP + H2O = ADP + phosphate + H(+). Its function is as follows. The RuvA-RuvB-RuvC complex processes Holliday junction (HJ) DNA during genetic recombination and DNA repair, while the RuvA-RuvB complex plays an important role in the rescue of blocked DNA replication forks via replication fork reversal (RFR). RuvA specifically binds to HJ cruciform DNA, conferring on it an open structure. The RuvB hexamer acts as an ATP-dependent pump, pulling dsDNA into and through the RuvAB complex. RuvB forms 2 homohexamers on either side of HJ DNA bound by 1 or 2 RuvA tetramers; 4 subunits per hexamer contact DNA at a time. Coordinated motions by a converter formed by DNA-disengaged RuvB subunits stimulates ATP hydrolysis and nucleotide exchange. Immobilization of the converter enables RuvB to convert the ATP-contained energy into a lever motion, pulling 2 nucleotides of DNA out of the RuvA tetramer per ATP hydrolyzed, thus driving DNA branch migration. The RuvB motors rotate together with the DNA substrate, which together with the progressing nucleotide cycle form the mechanistic basis for DNA recombination by continuous HJ branch migration. Branch migration allows RuvC to scan DNA until it finds its consensus sequence, where it cleaves and resolves cruciform DNA. This chain is Holliday junction branch migration complex subunit RuvB, found in Pseudomonas paraeruginosa (strain DSM 24068 / PA7) (Pseudomonas aeruginosa (strain PA7)).